Consider the following 423-residue polypeptide: Histidine--tRNA ligase (423 aa).

Belongs to the class-II aminoacyl-tRNA synthetase family. As to quaternary structure, homodimer.

The protein resides in the cytoplasm. It carries out the reaction tRNA(His) + L-histidine + ATP = L-histidyl-tRNA(His) + AMP + diphosphate + H(+). This Haemophilus influenzae (strain 86-028NP) protein is Histidine--tRNA ligase.